Reading from the N-terminus, the 315-residue chain is MSTARTDDDSWEITESVGATALGVASARAAETRSENPLIKDPFAQVFLDAAGDGVWNWHSAPQLPPELIEAEPTIPLQQQAMVSYMASRTAFFDSFFLEATGAGIRQAVILAAGLDARSWRLPWPAGTTVYELDQPRVLEFKESTLAEHGAQPACNRVAVPVDLRHDWPEALRQAGFDASAPSVWSAEGLMPYLPAAAQDLLFDRIQGLTVAGSRVAVEALGPKFLDPQARAKRRERMDRIQALMARIDPDRAVPRTDELWYFEEREDVGEWFGRHGWDVRVTPSDELMAGYGRPAPAEVRDFVPGNLFVAAQRR.

Residues D134 and 163 to 164 each bind S-adenosyl-L-methionine; that span reads DL.

The protein belongs to the UPF0677 family.

In terms of biological role, exhibits S-adenosyl-L-methionine-dependent methyltransferase activity. The sequence is that of Putative S-adenosyl-L-methionine-dependent methyltransferase MAV_4557 from Mycobacterium avium (strain 104).